Reading from the N-terminus, the 277-residue chain is MDKILSGKTVAIDIKGQIKSYTEELKASGKSLKISSILVGDDGGSVYYQNFQEKLANNLGIDFEKIKLDESISEENLKLKIEELNKDDSVNGIMLLLPLPKHIDERVVTNLIDADKDLDCLSEVSVGRFYKGEKCFMPCTPNSVITLLKAYNIEIEGKEVVIIGRSNIVGKPLFQMFLNENATVTVCHSKTKNLKEVCKRADILVVAIGRANFIDSSYVREGAVVIDVGTSEVNGKITGDVNFDDVYEKASLITPVPGGVGSLTTTLLLKNVCKELD.

Residues 164–166 (GRS), serine 189, and threonine 230 each bind NADP(+).

It belongs to the tetrahydrofolate dehydrogenase/cyclohydrolase family. In terms of assembly, homodimer.

The catalysed reaction is (6R)-5,10-methylene-5,6,7,8-tetrahydrofolate + NADP(+) = (6R)-5,10-methenyltetrahydrofolate + NADPH. The enzyme catalyses (6R)-5,10-methenyltetrahydrofolate + H2O = (6R)-10-formyltetrahydrofolate + H(+). It participates in one-carbon metabolism; tetrahydrofolate interconversion. Its function is as follows. Catalyzes the oxidation of 5,10-methylenetetrahydrofolate to 5,10-methenyltetrahydrofolate and then the hydrolysis of 5,10-methenyltetrahydrofolate to 10-formyltetrahydrofolate. This chain is Bifunctional protein FolD, found in Clostridium perfringens (strain SM101 / Type A).